A 796-amino-acid polypeptide reads, in one-letter code: RalBP1-associated Eps domain-containing protein 1 (796 aa).

The EH 1 domain occupies 10-113 (EQKYYSDLFS…SKNEQESRHA (104 aa)). Positions 105–237 (KNEQESRHAA…ENWVSFADTP (133 aa)) are disordered. The segment covering 115 to 126 (SYSSDSENQGSY) has biased composition (polar residues). A phosphoserine mark is found at Ser-143, Ser-145, Ser-162, Ser-166, and Ser-170. The span at 145 to 156 (SHDTVQPRTSAD) shows a compositional bias: polar residues. Thr-173 carries the post-translational modification Phosphothreonine. 2 positions are modified to phosphoserine: Ser-272 and Ser-273. The EH 2 domain maps to 285–374 (QRQYYVNQFK…ESLMPKLIDL (90 aa)). Tyr-288 is modified (phosphotyrosine). Phosphoserine is present on Ser-307. The EF-hand domain occupies 318-353 (LPILELSHIWELSDFDKDGALTLDEFCAAFHLVVAR). Asp-331, Asp-333, Asp-335, and Glu-342 together coordinate Ca(2+). The tract at residues 377–433 (SADVGDQPGEVGYSGSPAEAPPSKSPSMPSLNQTWPELNQSSEQWETFSERSSSSQT) is disordered. Polar residues predominate over residues 407–433 (LNQTWPELNQSSEQWETFSERSSSSQT). 4 positions are modified to phosphoserine: Ser-475, Ser-482, Ser-489, and Ser-540. Positions 506–543 (GNTVADGYSSSDSFTSDPEQIGSNVTRQRSHSGTSPDN) are enriched in polar residues. 2 disordered regions span residues 506 to 624 (GNTV…IPEQ) and 638 to 725 (ASNV…QKTG). The residue at position 544 (Thr-544) is a Phosphothreonine. Residues 544-554 (TAPPPPPPRPQ) show a composition bias toward pro residues. Position 562 is a phosphoserine (Ser-562). A compositionally biased stretch (polar residues) spans 563 to 574 (LDMNRTFTVTTG). Positions 575–584 (QQQAGVVAHP) are enriched in low complexity. Pro residues predominate over residues 585 to 596 (PAVPPRPQPSQA). The segment covering 612 to 623 (THTSTSPQQIPE) has biased composition (polar residues). The tract at residues 652 to 796 (HPEVLPAEKA…LEQLRPFSHL (145 aa)) is interaction with RALBP1. 2 stretches are compositionally biased toward basic and acidic residues: residues 671–681 (AKTDSKTEEKT) and 708–722 (KSED…EHTQ). Ser-709 and Ser-740 each carry phosphoserine. Residues 751 to 791 (SIRRNKETNTVLARLNSELQQQLKDVLEERISLEVQLEQLR) adopt a coiled-coil conformation.

Homodimer (Potential). Interacts with RAB11FIP2. Interacts with RALBP1, CRK and GRB2. Binding to RALBP1 does not affect its Ral-binding activity. Forms a complex with the SH3 domains of CRK and GRB2 which may link it to an EGF-responsive tyrosine kinase. Interacts with AMPH, ITSN1 (via SH3 domains) and SGIP1; may be involved in clathrin-mediated endocytosis. In terms of processing, EGF stimulates phosphorylation on Tyr-residues. Widely expressed with highest levels in heart and testis.

Its subcellular location is the membrane. The protein localises to the clathrin-coated pit. Its function is as follows. May coordinate the cellular actions of activated EGF receptors and Ral-GTPases. The protein is RalBP1-associated Eps domain-containing protein 1 (REPS1) of Homo sapiens (Human).